The sequence spans 448 residues: Cyclic dof factor 3 (448 aa).

Positions 26 to 108 (AVTVEDDEED…DGKTLKKPTK (83 aa)) are disordered. Over residues 29–39 (VEDDEEDDWSG) the composition is skewed to acidic residues. Positions 40–54 (GDDKSPEKVTPELSD) are enriched in basic and acidic residues. Residues 55 to 69 (KNNNNCNDNSFNNSK) are compositionally biased toward low complexity. Positions 80-99 (STDQIESSDTPEDNQQTTPD) are enriched in polar residues. Residues 110-164 (LPCPRCKSMETKFCYYNNYNINQPRHFCKACQRYWTAGGTMRNVPVGAGRRKNKS) form a Dof-type zinc finger. C112, C115, C137, and C140 together coordinate Zn(2+). Disordered regions lie at residues 243–269 (NGDD…AQSG) and 332–370 (SSSP…KQKA). Polar residues-rich tracts occupy residues 246–259 (DCSS…SNNH) and 332–347 (SSSP…NSPT). The segment covering 351–368 (HPRDEGSSKKDNETERKQ) has biased composition (basic and acidic residues).

As to quaternary structure, interacts with ADO2 (via kelch repeats) and ADO3 (via kelch repeats). As to expression, expressed in the vasculature of cotyledons and hypocotyls, leaves and roots.

It localises to the nucleus. In terms of biological role, transcription factor that binds specifically to a 5'-AA[AG]G-3' consensus core sequence. Regulates a photoperiodic flowering response. Transcriptional repressor of 'CONSTANS' expression. This chain is Cyclic dof factor 3 (CDF3), found in Arabidopsis thaliana (Mouse-ear cress).